Here is a 630-residue protein sequence, read N- to C-terminus: Chaperone protein HtpG (630 aa).

The interval 1–338 (MTVEANKETL…SNDLSLNVSR (338 aa)) is a; substrate-binding. The b stretch occupies residues 339–555 (EILQNDSTVE…QFDMGAQMKK (217 aa)). Residues 556–630 (IMEAAGQKVP…LNRLLLELAN (75 aa)) are c.

The protein belongs to the heat shock protein 90 family. Homodimer.

The protein localises to the cytoplasm. Functionally, molecular chaperone. Has ATPase activity. The sequence is that of Chaperone protein HtpG from Marinobacter nauticus (strain ATCC 700491 / DSM 11845 / VT8) (Marinobacter aquaeolei).